A 217-amino-acid polypeptide reads, in one-letter code: GTP cyclohydrolase-2 (217 aa).

50-54 (RIHSE) lines the GTP pocket. Residues Cys55, Cys66, and Cys68 each contribute to the Zn(2+) site. Residues Gln71, 93-95 (EGR), and Thr115 contribute to the GTP site. The active-site Proton acceptor is Asp127. Catalysis depends on Arg129, which acts as the Nucleophile. Residues Thr150 and Lys155 each coordinate GTP.

The protein belongs to the GTP cyclohydrolase II family. Requires Zn(2+) as cofactor.

It catalyses the reaction GTP + 4 H2O = 2,5-diamino-6-hydroxy-4-(5-phosphoribosylamino)-pyrimidine + formate + 2 phosphate + 3 H(+). The protein operates within cofactor biosynthesis; riboflavin biosynthesis; 5-amino-6-(D-ribitylamino)uracil from GTP: step 1/4. Its function is as follows. Catalyzes the conversion of GTP to 2,5-diamino-6-ribosylamino-4(3H)-pyrimidinone 5'-phosphate (DARP), formate and pyrophosphate. The protein is GTP cyclohydrolase-2 of Actinobacillus succinogenes (strain ATCC 55618 / DSM 22257 / CCUG 43843 / 130Z).